Reading from the N-terminus, the 131-residue chain is Type-5 thionin (131 aa).

The first 29 residues, 1–29 (MGGGQKGLESAIVCLLVLGLVLEQVQVEG), serve as a signal peptide directing secretion. The propeptide at 67–131 (LASVRSSDEP…GDTLLASLDD (65 aa)) is acidic domain.

Belongs to the plant thionin (TC 1.C.44) family. Is disulfide-linked. In terms of tissue distribution, developing endosperm.

The protein localises to the secreted. Functionally, thionins are small plant proteins which are toxic to animal cells. They seem to exert their toxic effect at the level of the cell membrane. Their precise function is not known. The protein is Type-5 thionin (TTHV) of Triticum aestivum (Wheat).